The chain runs to 2925 residues: Serine/threonine-protein kinase tel1 (2925 aa).

The disordered stretch occupies residues glutamate 172–proline 211. The span at aspartate 174–leucine 186 shows a compositional bias: basic and acidic residues. Positions threonine 195–threonine 204 are enriched in polar residues. The FAT domain occupies glutamate 1844 to serine 2467. In terms of domain architecture, PI3K/PI4K catalytic spans tyrosine 2571–arginine 2882. A G-loop region spans residues isoleucine 2577–alanine 2583. The segment at glycine 2749 to asparagine 2757 is catalytic loop. The activation loop stretch occupies residues histidine 2769–threonine 2793. The segment at glutamine 2853 to glutamate 2879 is disordered. The region spanning lysine 2893 to alanine 2925 is the FATC domain.

The protein belongs to the PI3/PI4-kinase family. ATM subfamily. In terms of assembly, associates with DNA double-strand breaks.

The protein resides in the nucleus. Its subcellular location is the chromosome. It is found in the telomere. It catalyses the reaction L-seryl-[protein] + ATP = O-phospho-L-seryl-[protein] + ADP + H(+). The enzyme catalyses L-threonyl-[protein] + ATP = O-phospho-L-threonyl-[protein] + ADP + H(+). Its function is as follows. Serine/threonine protein kinase which activates checkpoint signaling upon genotoxic stresses such as ionizing radiation (IR), ultraviolet light (UV), or DNA replication stalling, thereby acting as a DNA damage sensor. Recognizes the substrate consensus sequence [ST]-Q. Phosphorylates histone H2A to form H2AS128ph (gamma-H2A) at sites of DNA damage, involved in the regulation of DNA damage response mechanism. Required for the control of telomere length and genome stability. This Aspergillus oryzae (strain ATCC 42149 / RIB 40) (Yellow koji mold) protein is Serine/threonine-protein kinase tel1 (tel1).